A 131-amino-acid polypeptide reads, in one-letter code: uncharacterized protein (131 aa).

Residues 15-43 (QLQAEHGSAPSNIASGPSSNQQQQEVQDE) form a disordered region. Polar residues predominate over residues 23-34 (APSNIASGPSSN).

Belongs to the PDCD5 family.

This is an uncharacterized protein from Schizosaccharomyces pombe (strain 972 / ATCC 24843) (Fission yeast).